A 101-amino-acid chain; its full sequence is Large ribosomal subunit protein eL30 (101 aa).

The protein belongs to the eukaryotic ribosomal protein eL30 family.

The protein is Large ribosomal subunit protein eL30 of Pyrobaculum neutrophilum (strain DSM 2338 / JCM 9278 / NBRC 100436 / V24Sta) (Thermoproteus neutrophilus).